The primary structure comprises 129 residues: Ribosome-binding factor A (129 aa).

Belongs to the RbfA family. In terms of assembly, monomer. Binds 30S ribosomal subunits, but not 50S ribosomal subunits or 70S ribosomes.

Its subcellular location is the cytoplasm. Its function is as follows. One of several proteins that assist in the late maturation steps of the functional core of the 30S ribosomal subunit. Associates with free 30S ribosomal subunits (but not with 30S subunits that are part of 70S ribosomes or polysomes). Required for efficient processing of 16S rRNA. May interact with the 5'-terminal helix region of 16S rRNA. This is Ribosome-binding factor A from Marinomonas sp. (strain MWYL1).